Consider the following 675-residue polypeptide: Probable potassium transport system protein Kup (675 aa).

Residues 1–12 show a composition bias toward basic and acidic residues; the sequence is MEPAMPEHDGDH. The segment at 1–25 is disordered; sequence MEPAMPEHDGDHASNPPHGVGIPND. 12 helical membrane-spanning segments follow: residues 62–82, 104–124, 153–173, 195–215, 222–242, 255–275, 300–320, 332–352, 390–410, 419–439, 450–470, and 472–492; these read ALLA…LYAL, LASL…VILI, WLFG…SIIT, IIIP…VLGT, FGPI…KGIF, FALE…GSVV, WLFF…ALLI, LLVP…ATVI, IYLP…VLAF, AYGI…MVVF, VAIV…ANVL, and IPDG…IMTT.

This sequence belongs to the HAK/KUP transporter (TC 2.A.72) family.

Its subcellular location is the cell inner membrane. The enzyme catalyses K(+)(in) + H(+)(in) = K(+)(out) + H(+)(out). Transport of potassium into the cell. Likely operates as a K(+):H(+) symporter. The sequence is that of Probable potassium transport system protein Kup from Gluconobacter oxydans (strain 621H) (Gluconobacter suboxydans).